Reading from the N-terminus, the 487-residue chain is Arginine ADP-riboxanase CopC (487 aa).

A compositionally biased stretch (polar residues) spans 1–12 (MRVENHSPSLSK). Residues 1–27 (MRVENHSPSLSKLNPPEAGSGDPTAIG) are disordered. NAD(+) is bound by residues histidine 137, glutamine 138, serine 139, leucine 143, alanine 150, alanine 152, asparagine 154, and leucine 157. Residue histidine 137 coordinates nicotinamide. Positions 139 and 143 each coordinate ADP-D-ribose. Residues alanine 152, asparagine 154, leucine 157, glycine 166, asparagine 167, threonine 168, and phenylalanine 183 each coordinate ADP-D-ribose. Asparagine 167 lines the NAD(+) pocket. Phenylalanine 183 provides a ligand contact to NAD(+). Residues phenylalanine 183, phenylalanine 184, histidine 202, and phenylalanine 207 each contribute to the nicotinamide site. Histidine 202 is a binding site for NAD(+). Phenylalanine 207 and aspartate 230 together coordinate ADP-D-ribose. Aspartate 230 and glutamate 325 together coordinate NAD(+). Glutamate 325 contacts nicotinamide. Glutamate 325 is an active-site residue. 2 ANK repeats span residues 368 to 398 (DAVT…EAGD) and 444 to 476 (SGET…LLSE).

The protein belongs to the OspC family. In terms of assembly, interacts with host calmodulin (CALM1, CALM2 and/or CALM3); specifically interacts with the apo form of calmodulin and calmodulin-binding is required to mediate arginine ADP-riboxanation of host caspases.

The protein localises to the secreted. It is found in the host cytoplasm. It catalyses the reaction L-arginyl-[protein] + NAD(+) = ADP-riboxanated L-argininyl-[protein] + nicotinamide + NH4(+) + H(+). With respect to regulation, interaction with host calmodulin (CALM1, CALM2 and/or CALM3) is required to mediate arginine ADP-riboxanation of host caspases. ADP-riboxanase effector that inhibits host cell programmed cell death. Acts by mediating arginine ADP-riboxanation of host caspases (CASP3, CASP7, CASP8 and CASP9), blocking their processing and activation. ADP-riboxanation of host apoptotic caspases (CASP3, CASP7, CASP8 and CASP9) prevents their activation, thereby inhibiting host cell apoptosis. ADP-riboxanation of host CASP8 also inhibits host cell necroptosis. ADP-riboxanation of host CASP3 also abolishes pyroptosis by preventing its ability to cleave GSDME. May also able to inactivate CASP4/CASP11, blocking inhibiting LPS-induced pyroptosis; however this activity is unsure in vivo. ADP-riboxanation takes place in several steps: CopC first binds host caspases and NAD(+); NAD(+) is hydrolyzed to nicotinamide and ADP-D-ribose. CopC then transfers the ADP-D-ribose to the modified arginine of caspases and forms the ADP-D-ribose-deacylization on arginine, leading to deamination to remove one N-omega group on target arginine. The protein is Arginine ADP-riboxanase CopC of Chromobacterium violaceum (strain ATCC 12472 / DSM 30191 / JCM 1249 / CCUG 213 / NBRC 12614 / NCIMB 9131 / NCTC 9757 / MK).